A 440-amino-acid polypeptide reads, in one-letter code: tRNA-2-methylthio-N(6)-dimethylallyladenosine synthase (440 aa).

The MTTase N-terminal domain maps to 4–122; sequence KSYYIITHGC…LPKILERVFE (119 aa). The [4Fe-4S] cluster site is built by C13, C49, C83, C159, C163, and C166. The region spanning 145–375 is the Radical SAM core domain; that stretch reads REPGVRAWVT…IELQNGISLE (231 aa). The 63-residue stretch at 378-440 folds into the TRAM domain; it reads KNEEGNIHEI…KLFHLEGVLV (63 aa).

It belongs to the methylthiotransferase family. MiaB subfamily. As to quaternary structure, monomer. It depends on [4Fe-4S] cluster as a cofactor.

The protein resides in the cytoplasm. The catalysed reaction is N(6)-dimethylallyladenosine(37) in tRNA + (sulfur carrier)-SH + AH2 + 2 S-adenosyl-L-methionine = 2-methylsulfanyl-N(6)-dimethylallyladenosine(37) in tRNA + (sulfur carrier)-H + 5'-deoxyadenosine + L-methionine + A + S-adenosyl-L-homocysteine + 2 H(+). In terms of biological role, catalyzes the methylthiolation of N6-(dimethylallyl)adenosine (i(6)A), leading to the formation of 2-methylthio-N6-(dimethylallyl)adenosine (ms(2)i(6)A) at position 37 in tRNAs that read codons beginning with uridine. The chain is tRNA-2-methylthio-N(6)-dimethylallyladenosine synthase from Carboxydothermus hydrogenoformans (strain ATCC BAA-161 / DSM 6008 / Z-2901).